Here is a 194-residue protein sequence, read N- to C-terminus: Holliday junction branch migration complex subunit RuvA (194 aa).

A domain I region spans residues 1–62 (MIGYLKGNVI…EDSLDLYGFK (62 aa)). A domain II region spans residues 63–136 (TMEERELFET…KGKLKDMSGD (74 aa)). The flexible linker stretch occupies residues 136–140 (DFEEP). Residues 141 to 194 (LPDNRNTELSDALASLGYSELEIEEALSNADIKNNGSLEENIKKALGYLGSKGS) are domain III.

This sequence belongs to the RuvA family. In terms of assembly, homotetramer. Forms an RuvA(8)-RuvB(12)-Holliday junction (HJ) complex. HJ DNA is sandwiched between 2 RuvA tetramers; dsDNA enters through RuvA and exits via RuvB. An RuvB hexamer assembles on each DNA strand where it exits the tetramer. Each RuvB hexamer is contacted by two RuvA subunits (via domain III) on 2 adjacent RuvB subunits; this complex drives branch migration. In the full resolvosome a probable DNA-RuvA(4)-RuvB(12)-RuvC(2) complex forms which resolves the HJ.

The protein resides in the cytoplasm. The RuvA-RuvB-RuvC complex processes Holliday junction (HJ) DNA during genetic recombination and DNA repair, while the RuvA-RuvB complex plays an important role in the rescue of blocked DNA replication forks via replication fork reversal (RFR). RuvA specifically binds to HJ cruciform DNA, conferring on it an open structure. The RuvB hexamer acts as an ATP-dependent pump, pulling dsDNA into and through the RuvAB complex. HJ branch migration allows RuvC to scan DNA until it finds its consensus sequence, where it cleaves and resolves the cruciform DNA. In Halothermothrix orenii (strain H 168 / OCM 544 / DSM 9562), this protein is Holliday junction branch migration complex subunit RuvA.